A 165-amino-acid chain; its full sequence is Lipoprotein signal peptidase (165 aa).

Transmembrane regions (helical) follow at residues 9-29, 65-85, and 100-120; these read SFLW…YFVV, WQKY…CYFL, and ALII…GFVV. Catalysis depends on residues Asp121 and Asp139. Residues 134–154 form a helical membrane-spanning segment; it reads VFNVADIAISLGAGLMILDAF.

Belongs to the peptidase A8 family.

Its subcellular location is the cell inner membrane. The catalysed reaction is Release of signal peptides from bacterial membrane prolipoproteins. Hydrolyzes -Xaa-Yaa-Zaa-|-(S,diacylglyceryl)Cys-, in which Xaa is hydrophobic (preferably Leu), and Yaa (Ala or Ser) and Zaa (Gly or Ala) have small, neutral side chains.. It participates in protein modification; lipoprotein biosynthesis (signal peptide cleavage). This protein specifically catalyzes the removal of signal peptides from prolipoproteins. The polypeptide is Lipoprotein signal peptidase (Pasteurella multocida (strain Pm70)).